A 719-amino-acid chain; its full sequence is Alpha-galactosidase 2 (719 aa).

D472 serves as the catalytic Nucleophile. D542 functions as the Proton donor in the catalytic mechanism.

The protein belongs to the glycosyl hydrolase 36 family.

It catalyses the reaction Hydrolysis of terminal, non-reducing alpha-D-galactose residues in alpha-D-galactosides, including galactose oligosaccharides, galactomannans and galactolipids.. Alpha-galactosidase associated with the sucrase operon. This Pediococcus pentosaceus protein is Alpha-galactosidase 2 (agaS).